A 476-amino-acid polypeptide reads, in one-letter code: Bifunctional protein HldE (476 aa).

The segment at 1–318 is ribokinase; the sequence is MKPTLPNYDQ…AEAIHGSQDS (318 aa). An ATP-binding site is contributed by 195 to 198; that stretch reads NMLE. Residue Asp-264 is part of the active site. Positions 344-476 are cytidylyltransferase; it reads MTNGCFDILH…IIEAIKGGRG (133 aa).

This sequence in the N-terminal section; belongs to the carbohydrate kinase PfkB family. The protein in the C-terminal section; belongs to the cytidylyltransferase family. In terms of assembly, homodimer.

It carries out the reaction D-glycero-beta-D-manno-heptose 7-phosphate + ATP = D-glycero-beta-D-manno-heptose 1,7-bisphosphate + ADP + H(+). The enzyme catalyses D-glycero-beta-D-manno-heptose 1-phosphate + ATP + H(+) = ADP-D-glycero-beta-D-manno-heptose + diphosphate. Its pathway is nucleotide-sugar biosynthesis; ADP-L-glycero-beta-D-manno-heptose biosynthesis; ADP-L-glycero-beta-D-manno-heptose from D-glycero-beta-D-manno-heptose 7-phosphate: step 1/4. It functions in the pathway nucleotide-sugar biosynthesis; ADP-L-glycero-beta-D-manno-heptose biosynthesis; ADP-L-glycero-beta-D-manno-heptose from D-glycero-beta-D-manno-heptose 7-phosphate: step 3/4. Its function is as follows. Catalyzes the phosphorylation of D-glycero-D-manno-heptose 7-phosphate at the C-1 position to selectively form D-glycero-beta-D-manno-heptose-1,7-bisphosphate. Functionally, catalyzes the ADP transfer from ATP to D-glycero-beta-D-manno-heptose 1-phosphate, yielding ADP-D-glycero-beta-D-manno-heptose. The polypeptide is Bifunctional protein HldE (Aliivibrio fischeri (strain MJ11) (Vibrio fischeri)).